Reading from the N-terminus, the 115-residue chain is Salivary anti-complement protein (115 aa).

An N-terminal signal peptide occupies residues 1–22 (MKFFYLIFSAIFFLADPALVKC). Disulfide bonds link C26–C108, C41–C92, and C83–C101.

In terms of assembly, may form multimers. Salivary gland (at protein level).

It is found in the secreted. In terms of biological role, salivary protein that inhibits the classical pathway of complement system activation in the host while having no inhibitory effect on the alternative or lectin pathways. Prevent cleavage of host C4 and consequently impairs the activation of factors downstream of C4b in the complement cascade. In Lutzomyia longipalpis (Sand fly), this protein is Salivary anti-complement protein.